The sequence spans 341 residues: Shk1 kinase-binding protein 15 (341 aa).

WD repeat units follow at residues Ala-33–Asp-70, Ile-77–Thr-114, Ser-119–Val-157, Ser-197–Glu-234, and Ala-237–His-274. The disordered stretch occupies residues Asn-293–Ala-341. Basic and acidic residues predominate over residues Lys-297 to Leu-309.

Functionally, negatively regulates pak1/shk1 kinase activity leading to proper execution of cytoskeletal remodeling and cytokinetic functions. In terms of biological role, interacts with pak1/shk1. The sequence is that of Shk1 kinase-binding protein 15 (skb15) from Schizosaccharomyces pombe (strain 972 / ATCC 24843) (Fission yeast).